The chain runs to 211 residues: tRNA (guanine-N(7)-)-methyltransferase (211 aa).

The S-adenosyl-L-methionine site is built by glutamate 44, aspartate 69, aspartate 96, and aspartate 118. Aspartate 118 is an active-site residue. Substrate is bound at residue lysine 122. The segment at 124–129 is interaction with RNA; it reads KHEKRR. Substrate contacts are provided by residues aspartate 154 and 191–194; that span reads TEYE.

Belongs to the class I-like SAM-binding methyltransferase superfamily. TrmB family.

The enzyme catalyses guanosine(46) in tRNA + S-adenosyl-L-methionine = N(7)-methylguanosine(46) in tRNA + S-adenosyl-L-homocysteine. It participates in tRNA modification; N(7)-methylguanine-tRNA biosynthesis. Its function is as follows. Catalyzes the formation of N(7)-methylguanine at position 46 (m7G46) in tRNA. This Streptococcus agalactiae serotype Ia (strain ATCC 27591 / A909 / CDC SS700) protein is tRNA (guanine-N(7)-)-methyltransferase.